We begin with the raw amino-acid sequence, 181 residues long: Ribonuclease M5 (181 aa).

One can recognise a Toprim domain in the interval 5-88 (KEIIVVEGKD…IKHAYLNTKD (84 aa)). Mg(2+)-binding residues include E11, D57, and D59.

Belongs to the ribonuclease M5 family. Mg(2+) is required as a cofactor.

It is found in the cytoplasm. It carries out the reaction Endonucleolytic cleavage of RNA, removing 21 and 42 nucleotides, respectively, from the 5'- and 3'-termini of a 5S-rRNA precursor.. In terms of biological role, required for correct processing of both the 5' and 3' ends of 5S rRNA precursor. Cleaves both sides of a double-stranded region yielding mature 5S rRNA in one step. The protein is Ribonuclease M5 of Borreliella burgdorferi (strain ATCC 35210 / DSM 4680 / CIP 102532 / B31) (Borrelia burgdorferi).